The primary structure comprises 1073 residues: Carbamoyl phosphate synthase large chain (1073 aa).

Residues 2–403 form a carboxyphosphate synthetic domain region; the sequence is PKRTDIKSIL…SLQKALRGLE (402 aa). ATP contacts are provided by R129, R169, G175, G176, E208, L210, E215, G241, I242, H243, Q285, and E299. The 196-residue stretch at 133–328 folds into the ATP-grasp 1 domain; that stretch reads DVAMKKIGLE…IAKVAAKLAV (196 aa). Q285, E299, and N301 together coordinate Mg(2+). Residues Q285, E299, and N301 each coordinate Mn(2+). The interval 404-553 is oligomerization domain; sequence VGATGFDPKV…YSTYEEECEA (150 aa). A carbamoyl phosphate synthetic domain region spans residues 554-936; that stretch reads NPSTDREKIM…AFAKAQLGSN (383 aa). In terms of domain architecture, ATP-grasp 2 spans 679-870; sequence QHAVERLKLK…LAKVAARVMA (192 aa). Residues R715, H754, L756, E761, G786, V787, H788, S789, Q829, and E841 each coordinate ATP. Mg(2+) is bound by residues Q829, E841, and N843. Residues Q829, E841, and N843 each contribute to the Mn(2+) site. In terms of domain architecture, MGS-like spans 937 to 1073; sequence STMKKHGRAL…SVQEMHAQIK (137 aa). An allosteric domain region spans residues 937 to 1073; it reads STMKKHGRAL…SVQEMHAQIK (137 aa).

It belongs to the CarB family. In terms of assembly, composed of two chains; the small (or glutamine) chain promotes the hydrolysis of glutamine to ammonia, which is used by the large (or ammonia) chain to synthesize carbamoyl phosphate. Tetramer of heterodimers (alpha,beta)4. It depends on Mg(2+) as a cofactor. Requires Mn(2+) as cofactor.

The enzyme catalyses hydrogencarbonate + L-glutamine + 2 ATP + H2O = carbamoyl phosphate + L-glutamate + 2 ADP + phosphate + 2 H(+). It catalyses the reaction hydrogencarbonate + NH4(+) + 2 ATP = carbamoyl phosphate + 2 ADP + phosphate + 2 H(+). It participates in amino-acid biosynthesis; L-arginine biosynthesis; carbamoyl phosphate from bicarbonate: step 1/1. Its pathway is pyrimidine metabolism; UMP biosynthesis via de novo pathway; (S)-dihydroorotate from bicarbonate: step 1/3. Its function is as follows. Large subunit of the glutamine-dependent carbamoyl phosphate synthetase (CPSase). CPSase catalyzes the formation of carbamoyl phosphate from the ammonia moiety of glutamine, carbonate, and phosphate donated by ATP, constituting the first step of 2 biosynthetic pathways, one leading to arginine and/or urea and the other to pyrimidine nucleotides. The large subunit (synthetase) binds the substrates ammonia (free or transferred from glutamine from the small subunit), hydrogencarbonate and ATP and carries out an ATP-coupled ligase reaction, activating hydrogencarbonate by forming carboxy phosphate which reacts with ammonia to form carbamoyl phosphate. The sequence is that of Carbamoyl phosphate synthase large chain from Escherichia coli (strain K12).